The sequence spans 178 residues: Large ribosomal subunit protein uL6 (178 aa).

The protein belongs to the universal ribosomal protein uL6 family. Part of the 50S ribosomal subunit.

Functionally, this protein binds to the 23S rRNA, and is important in its secondary structure. It is located near the subunit interface in the base of the L7/L12 stalk, and near the tRNA binding site of the peptidyltransferase center. In Streptococcus agalactiae serotype Ia (strain ATCC 27591 / A909 / CDC SS700), this protein is Large ribosomal subunit protein uL6.